The sequence spans 244 residues: uncharacterized protein (244 aa).

The next 6 helical transmembrane spans lie at 22–42, 63–83, 110–130, 140–160, 186–206, and 213–233; these read IMLQ…LLSF, FIFS…WGLT, VILL…EAFA, IMSL…NLTV, GVLF…IFQL, and AVFD…MLVV.

It is found in the cell membrane. This is an uncharacterized protein from Haemophilus influenzae (strain ATCC 51907 / DSM 11121 / KW20 / Rd).